A 471-amino-acid polypeptide reads, in one-letter code: Chitobiosyldiphosphodolichol beta-mannosyltransferase (471 aa).

Residues 1-31 (MDTSSVTMHTERACCHQAQRAVAAMLDKAPS) are Lumenal-facing. Residues 32–52 (WLIWTAVLYVGLPFMLYWAVP) traverse the membrane as a helical segment. Residues 53-126 (YLFYHNKTKS…ALPGASNAGK (74 aa)) are Cytoplasmic-facing. Positions 127–147 (SLGQTARKVVLQTCHIVRQLW) form an intramembrane region, helical. Over 148-471 (ELRGCDYILI…MSELQVVRQS (324 aa)) the chain is Cytoplasmic.

The protein belongs to the glycosyltransferase group 1 family.

The protein resides in the endoplasmic reticulum membrane. It catalyses the reaction an N,N'-diacetylchitobiosyl-diphospho-di-trans,poly-cis-dolichol + GDP-alpha-D-mannose = a beta-D-Man-(1-&gt;4)-beta-D-GlcNAc-(1-&gt;4)-alpha-D-GlcNAc-diphospho-di-trans,poly-cis-dolichol + GDP + H(+). It functions in the pathway protein modification; protein glycosylation. Functionally, participates in the formation of the lipid-linked precursor oligosaccharide for N-glycosylation. Involved in assembling the dolichol-pyrophosphate-GlcNAc(2)-Man(5) intermediate on the cytoplasmic surface of the ER. This chain is Chitobiosyldiphosphodolichol beta-mannosyltransferase (ALG1), found in Eremothecium gossypii (strain ATCC 10895 / CBS 109.51 / FGSC 9923 / NRRL Y-1056) (Yeast).